A 260-amino-acid chain; its full sequence is HTH-type transcriptional repressor NanR (260 aa).

The interval 1–20 (MNPFDSQSEDASDAIGRSLG) is disordered. The HTH gntR-type domain maps to 27–95 (KKLSEMVEEE…NGERARVSRP (69 aa)). The H-T-H motif DNA-binding region spans 55-74 (ERELMAFFNVGRPSVREALA).

This sequence belongs to the NanR family.

Functionally, transcriptional repressor that controls expression of the genes required for the catabolism of sialic acids. The protein is HTH-type transcriptional repressor NanR of Cronobacter sakazakii (strain ATCC BAA-894) (Enterobacter sakazakii).